We begin with the raw amino-acid sequence, 415 residues long: Mechanosensing system component YbdG (415 aa).

Residues methionine 1–methionine 24 are Periplasmic-facing. A helical transmembrane segment spans residues isoleucine 25–leucine 45. Over arginine 46–lysine 67 the chain is Cytoplasmic. The chain crosses the membrane as a helical span at residues leucine 68–tryptophan 88. The Periplasmic segment spans residues leucine 89–glutamine 104. Residues leucine 105–leucine 125 traverse the membrane as a helical segment. Over alanine 126–glycine 148 the chain is Cytoplasmic. The helical transmembrane segment at alanine 149 to isoleucine 169 threads the bilayer. Residues serine 170–glycine 173 are Periplasmic-facing. A helical membrane pass occupies residues alanine 174–isoleucine 194. Residues glutamine 195–glutamine 415 lie on the Cytoplasmic side of the membrane.

The protein belongs to the MscS (TC 1.A.23) family. In terms of assembly, homoheptamer.

Its subcellular location is the cell inner membrane. In terms of biological role, functions as a component of a mechanosensing system that transmits signals triggered by external osmotic changes to intracellular factors. The sequence is that of Mechanosensing system component YbdG (ybdG) from Shigella flexneri.